We begin with the raw amino-acid sequence, 386 residues long: 8-amino-7-oxononanoate synthase (386 aa).

Residue Arg-23 participates in substrate binding. 110-111 is a pyridoxal 5'-phosphate binding site; it reads GY. His-135 contacts substrate. 3 residues coordinate pyridoxal 5'-phosphate: Ser-181, His-209, and Thr-236. Residue Lys-239 is modified to N6-(pyridoxal phosphate)lysine. Thr-354 contributes to the substrate binding site.

It belongs to the class-II pyridoxal-phosphate-dependent aminotransferase family. BioF subfamily. As to quaternary structure, homodimer. Pyridoxal 5'-phosphate serves as cofactor.

It catalyses the reaction 6-carboxyhexanoyl-[ACP] + L-alanine + H(+) = (8S)-8-amino-7-oxononanoate + holo-[ACP] + CO2. The protein operates within cofactor biosynthesis; biotin biosynthesis. Its function is as follows. Catalyzes the decarboxylative condensation of pimeloyl-[acyl-carrier protein] and L-alanine to produce 8-amino-7-oxononanoate (AON), [acyl-carrier protein], and carbon dioxide. The chain is 8-amino-7-oxononanoate synthase from Thiobacillus denitrificans (strain ATCC 25259 / T1).